Consider the following 339-residue polypeptide: DNA-directed RNA polymerase subunit alpha (339 aa).

An alpha N-terminal domain (alpha-NTD) region spans residues 1–233 (MVREEVAGST…DLFLPFLHAE (233 aa)). The interval 264-339 (KKGIPLNCIF…IDLLKNKLSF (76 aa)) is alpha C-terminal domain (alpha-CTD).

The protein belongs to the RNA polymerase alpha chain family. In terms of assembly, in plastids the minimal PEP RNA polymerase catalytic core is composed of four subunits: alpha, beta, beta', and beta''. When a (nuclear-encoded) sigma factor is associated with the core the holoenzyme is formed, which can initiate transcription.

It is found in the plastid. It localises to the chloroplast. The enzyme catalyses RNA(n) + a ribonucleoside 5'-triphosphate = RNA(n+1) + diphosphate. In terms of biological role, DNA-dependent RNA polymerase catalyzes the transcription of DNA into RNA using the four ribonucleoside triphosphates as substrates. The chain is DNA-directed RNA polymerase subunit alpha from Secale strictum (Mountain rye).